A 192-amino-acid polypeptide reads, in one-letter code: Large ribosomal subunit protein uL5 (192 aa).

It belongs to the universal ribosomal protein uL5 family. As to quaternary structure, part of the 50S ribosomal subunit; part of the 5S rRNA/L5/L18/L25 subcomplex. Contacts the 5S rRNA and the P site tRNA. Forms a bridge to the 30S subunit in the 70S ribosome.

In terms of biological role, this is one of the proteins that bind and probably mediate the attachment of the 5S RNA into the large ribosomal subunit, where it forms part of the central protuberance. In the 70S ribosome it contacts protein S13 of the 30S subunit (bridge B1b), connecting the 2 subunits; this bridge is implicated in subunit movement. Contacts the P site tRNA; the 5S rRNA and some of its associated proteins might help stabilize positioning of ribosome-bound tRNAs. This Mesorhizobium japonicum (strain LMG 29417 / CECT 9101 / MAFF 303099) (Mesorhizobium loti (strain MAFF 303099)) protein is Large ribosomal subunit protein uL5.